The sequence spans 315 residues: MSESLRIIFAGTPDFAARHLDALLSSGHNVVGVFTQPDRPAGRGKKLMPSPVKVLAEEKGLPVFQPVSLRPQENQQLVADLQADVMVVVAYGLILPKAVLEMPRLGCINVHGSLLPRWRGAAPIQRSLWAGDAETGVTIMQMDVGLDTGDMLYKLSCPITAEDTSGTLYDKLAELGPQGLITTLKQLADGTAKPEVQDETLVTYAEKLSKEEARIDWSLSAAQLERCIRAFNPWPMSWLEIEGQPVKVWKASVIDTATNAAPGTILEANKQGIQVATGGGILNLLSLQPAGKKAMSAQDLLNSRREWFVPGNRLV.

Serine 113 to proline 116 is a binding site for (6S)-5,6,7,8-tetrahydrofolate.

Belongs to the Fmt family.

It carries out the reaction L-methionyl-tRNA(fMet) + (6R)-10-formyltetrahydrofolate = N-formyl-L-methionyl-tRNA(fMet) + (6S)-5,6,7,8-tetrahydrofolate + H(+). Its function is as follows. Attaches a formyl group to the free amino group of methionyl-tRNA(fMet). The formyl group appears to play a dual role in the initiator identity of N-formylmethionyl-tRNA by promoting its recognition by IF2 and preventing the misappropriation of this tRNA by the elongation apparatus. The protein is Methionyl-tRNA formyltransferase of Escherichia fergusonii (strain ATCC 35469 / DSM 13698 / CCUG 18766 / IAM 14443 / JCM 21226 / LMG 7866 / NBRC 102419 / NCTC 12128 / CDC 0568-73).